Consider the following 783-residue polypeptide: LPS-assembly protein LptD (783 aa).

The signal sequence occupies residues 1–24 (MSCFSRTFLAASISAALFAPQIQA).

Belongs to the LptD family. As to quaternary structure, component of the lipopolysaccharide transport and assembly complex. Interacts with LptE and LptA.

Its subcellular location is the cell outer membrane. In terms of biological role, together with LptE, is involved in the assembly of lipopolysaccharide (LPS) at the surface of the outer membrane. This Vibrio cholerae serotype O1 (strain ATCC 39315 / El Tor Inaba N16961) protein is LPS-assembly protein LptD.